The chain runs to 312 residues: NADH-ubiquinone oxidoreductase chain 1 (312 aa).

The next 8 membrane-spanning stretches (helical) occupy residues 3 to 23 (FMEL…LTVA), 37 to 57 (PNAV…KLLL), 69 to 89 (FMLI…WAMI), 104 to 124 (FMLA…AGWA), 141 to 161 (LISY…LTGT), 173 to 193 (SMWL…GCVA), 233 to 253 (MLFY…GLIL), and 279 to 299 (LIAM…LFMP).

The protein belongs to the complex I subunit 1 family.

It localises to the mitochondrion inner membrane. The catalysed reaction is a ubiquinone + NADH + 5 H(+)(in) = a ubiquinol + NAD(+) + 4 H(+)(out). Its function is as follows. Core subunit of the mitochondrial membrane respiratory chain NADH dehydrogenase (Complex I) that is believed to belong to the minimal assembly required for catalysis. Complex I functions in the transfer of electrons from NADH to the respiratory chain. The immediate electron acceptor for the enzyme is believed to be ubiquinone. The protein is NADH-ubiquinone oxidoreductase chain 1 (ND1) of Debaryomyces hansenii (strain ATCC 36239 / CBS 767 / BCRC 21394 / JCM 1990 / NBRC 0083 / IGC 2968) (Yeast).